The primary structure comprises 516 residues: uncharacterized protein (516 aa).

PFTB repeat units lie at residues 45–86 and 401–443; these read RQDA…QRAD and DERA…DGSE.

This is an uncharacterized protein from Bradyrhizobium diazoefficiens (strain JCM 10833 / BCRC 13528 / IAM 13628 / NBRC 14792 / USDA 110).